A 118-amino-acid chain; its full sequence is Large ribosomal subunit protein bL20 (118 aa).

This sequence belongs to the bacterial ribosomal protein bL20 family.

Its function is as follows. Binds directly to 23S ribosomal RNA and is necessary for the in vitro assembly process of the 50S ribosomal subunit. It is not involved in the protein synthesizing functions of that subunit. In Erwinia tasmaniensis (strain DSM 17950 / CFBP 7177 / CIP 109463 / NCPPB 4357 / Et1/99), this protein is Large ribosomal subunit protein bL20.